A 436-amino-acid polypeptide reads, in one-letter code: KICSTOR complex protein kaptin (436 aa).

N-acetylmethionine is present on Met1.

In terms of assembly, part of the KICSTOR complex composed of KPTN, ITFG2, KICS2 and SZT2. SZT2 probably serves as a link between the other three proteins in the KICSTOR complex and mediates the direct interaction with the GATOR1 complex. May associate with F-actin filaments.

It is found in the lysosome membrane. The protein resides in the cell projection. The protein localises to the lamellipodium. It localises to the stereocilium. Its function is as follows. As part of the KICSTOR complex functions in the amino acid-sensing branch of the TORC1 signaling pathway. Recruits, in an amino acid-independent manner, the GATOR1 complex to the lysosomal membranes and allows its interaction with GATOR2 and the RAG GTPases. Functions upstream of the RAG GTPases and is required to negatively regulate mTORC1 signaling in absence of amino acids. In absence of the KICSTOR complex mTORC1 is constitutively localized to the lysosome and activated. The KICSTOR complex is also probably involved in the regulation of mTORC1 by glucose. This is KICSTOR complex protein kaptin from Homo sapiens (Human).